The sequence spans 335 residues: Nuclear distribution protein nudE homolog 1 (335 aa).

The interval 1-93 is self-association; it reads MEDSGKTFSS…VQHSEGYRQI (93 aa). Positions 18-188 form a coiled coil; sequence WKDLAMTYKQ…ELAVQQKQEK (171 aa). Positions 88–156 are interaction with PAFAH1B1; sequence EGYRQISALE…ERNAFLESEL (69 aa). The segment at 167 to 290 is interaction with CENPF; that stretch reads QRLKDEARDL…QSPNRTGGPA (124 aa). The disordered stretch occupies residues 181-246; that stretch reads AVQQKQEKPR…DDSTGGTPLT (66 aa). Polar residues predominate over residues 204 to 214; sequence TAVQATGSVPS. A Phosphoserine modification is found at Ser-211. 2 positions are modified to phosphothreonine: Thr-215 and Thr-228. Phosphoserine is present on residues Ser-231 and Ser-239. 2 positions are modified to phosphothreonine: Thr-243 and Thr-246. Cys-274 carries S-palmitoyl cysteine; by ZDHHC2, ZDHHC3 and ZDHHC7 lipidation. Residues 279 to 335 are disordered; it reads YDQSPNRTGGPASGRSSKNRDGGERRPSSTSVPLGDKGLDTSCRWLSKSTTRSSSSC. Ser-282 bears the Phosphoserine mark. Over residues 296–305 the composition is skewed to basic and acidic residues; sequence KNRDGGERRP. Ser-309 is modified (phosphoserine). Residues 325–335 show a composition bias toward low complexity; it reads SKSTTRSSSSC.

Belongs to the nudE family. Homodimer. Interacts with CNTRL, LIS1, dynein, SLMAP and TCP1. Interacts with CENPF, dynactin, tubulin gamma, PAFAH1B1, PCM1 and PCNT. Interacts with ZNF365. Interacts with GTP-bound RAB9A and RAB9B; the interaction leads to RAB9-dynein motor tethering. Interacts (via C-terminus) with MCRS1 (via C-terminus); phosphorylation of NDE1 inhibits the interaction. Post-translationally, phosphorylated in mitosis. Phosphorylated in vitro by CDC2. Phosphorylation at Thr-246 is essential for the G2/M transition. In terms of tissue distribution, expressed in the neuroepithelium throughout the developing brain, including the cerebral cortex and cerebellum.

The protein resides in the cytoplasm. The protein localises to the cytoskeleton. It localises to the microtubule organizing center. It is found in the centrosome. Its subcellular location is the chromosome. The protein resides in the centromere. The protein localises to the kinetochore. It localises to the spindle. It is found in the cleavage furrow. Its subcellular location is the cytoplasmic vesicle membrane. Its function is as follows. Required for centrosome duplication and formation and function of the mitotic spindle. Essential for the development of the cerebral cortex. May regulate the production of neurons by controlling the orientation of the mitotic spindle during division of cortical neuronal progenitors of the proliferative ventricular zone of the brain. Orientation of the division plane perpendicular to the layers of the cortex gives rise to two proliferative neuronal progenitors whereas parallel orientation of the division plane yields one proliferative neuronal progenitor and a postmitotic neuron. A premature shift towards a neuronal fate within the progenitor population may result in an overall reduction in the final number of neurons and an increase in the number of neurons in the deeper layers of the cortex. Acts as a RAB9A/B effector that tethers RAB9-associated late endosomes to the dynein motor for their retrograde transport to the trans-Golgi network. The sequence is that of Nuclear distribution protein nudE homolog 1 from Homo sapiens (Human).